Reading from the N-terminus, the 283-residue chain is Shikimate kinase (283 aa).

Position 86 to 96 (86 to 96) interacts with ATP; it reads PIKSGLSSSSA.

It belongs to the GHMP kinase family. Archaeal shikimate kinase subfamily.

It is found in the cytoplasm. The catalysed reaction is shikimate + ATP = 3-phosphoshikimate + ADP + H(+). The protein operates within metabolic intermediate biosynthesis; chorismate biosynthesis; chorismate from D-erythrose 4-phosphate and phosphoenolpyruvate: step 5/7. The polypeptide is Shikimate kinase (Methanococcus maripaludis (strain C6 / ATCC BAA-1332)).